Here is a 169-residue protein sequence, read N- to C-terminus: Transcription antitermination protein NusB (169 aa).

The tract at residues 1–23 (MADSKKPAIKKPVPKGDRKANRR) is disordered.

This sequence belongs to the NusB family.

Functionally, involved in transcription antitermination. Required for transcription of ribosomal RNA (rRNA) genes. Binds specifically to the boxA antiterminator sequence of the ribosomal RNA (rrn) operons. This chain is Transcription antitermination protein NusB, found in Rhodopseudomonas palustris (strain HaA2).